Reading from the N-terminus, the 373-residue chain is 4-hydroxy-3-methylbut-2-en-1-yl diphosphate synthase (flavodoxin) (373 aa).

[4Fe-4S] cluster is bound by residues Cys269, Cys272, Cys304, and Glu311.

The protein belongs to the IspG family. Requires [4Fe-4S] cluster as cofactor.

The enzyme catalyses (2E)-4-hydroxy-3-methylbut-2-enyl diphosphate + oxidized [flavodoxin] + H2O + 2 H(+) = 2-C-methyl-D-erythritol 2,4-cyclic diphosphate + reduced [flavodoxin]. The protein operates within isoprenoid biosynthesis; isopentenyl diphosphate biosynthesis via DXP pathway; isopentenyl diphosphate from 1-deoxy-D-xylulose 5-phosphate: step 5/6. Converts 2C-methyl-D-erythritol 2,4-cyclodiphosphate (ME-2,4cPP) into 1-hydroxy-2-methyl-2-(E)-butenyl 4-diphosphate. The sequence is that of 4-hydroxy-3-methylbut-2-en-1-yl diphosphate synthase (flavodoxin) from Baumannia cicadellinicola subsp. Homalodisca coagulata.